A 393-amino-acid polypeptide reads, in one-letter code: METFLFTSESVNEGHPDKLCDQISDAVLDACLEQDPESKVACETCTKTNLVMVFGEITTKAIVDYEKIVRDTCRNIGFVSDDVGLDADNCKVLVYIEQQSPDIAQGVHGHLTKRPEEIGAGDQGHMFGYATDETPELMPLSHVLATKLGARLTEVRKNGTCRWLKPDGKTQVTVEYCNDNGAMIPIRVHTVLISTQHDETVTNDEIARDLKEHAIKPVIPEKYLDEKTIFHLNPSGRFVIGGPHGDAGLTGRKIIIDTYGGWGAHGGGAFSGKDPTKVDRSGAYIVRQAAKSIVASGLARRCIVQVSYAIGVPEPLSVFVDTYGTGKIPDREILKIVKENFDFRPGMMSINLDLKRGGNGRFLKTAAYGHFGRDDADFTWEVVKPLKWENPQD.

Position 9 (Glu9) interacts with Mg(2+). ATP is bound at residue His15. Glu43 is a binding site for K(+). The L-methionine site is built by Glu56 and Gln99. ATP is bound by residues 167-169, 235-238, Asp246, 252-253, Ala269, Lys273, and Lys277; these read DGK, SGRF, and RK. Asp246 is a binding site for L-methionine. Lys277 is a binding site for L-methionine.

This sequence belongs to the AdoMet synthase family. In terms of assembly, homotetramer. Requires Mn(2+) as cofactor. The cofactor is Mg(2+). It depends on Co(2+) as a cofactor. K(+) is required as a cofactor.

It is found in the cytoplasm. It carries out the reaction L-methionine + ATP + H2O = S-adenosyl-L-methionine + phosphate + diphosphate. The protein operates within amino-acid biosynthesis; S-adenosyl-L-methionine biosynthesis; S-adenosyl-L-methionine from L-methionine: step 1/1. In terms of biological role, catalyzes the formation of S-adenosylmethionine from methionine and ATP. The reaction comprises two steps that are both catalyzed by the same enzyme: formation of S-adenosylmethionine (AdoMet) and triphosphate, and subsequent hydrolysis of the triphosphate. The sequence is that of S-adenosylmethionine synthase (SAMS) from Solanum palustre (Non-tuber-performing potato).